The following is a 229-amino-acid chain: Ribonuclease 3 (229 aa).

The RNase III domain occupies 5–136 (LAELERALGI…VIGAIYLDQG (132 aa)). Glutamate 49 is a Mg(2+) binding site. The active site involves aspartate 53. Mg(2+) contacts are provided by aspartate 122 and glutamate 125. Glutamate 125 is a catalytic residue. The DRBM domain occupies 161-229 (DPTTRLQEIV…AQAALADIDR (69 aa)).

This sequence belongs to the ribonuclease III family. In terms of assembly, homodimer. The cofactor is Mg(2+).

It is found in the cytoplasm. It carries out the reaction Endonucleolytic cleavage to 5'-phosphomonoester.. Functionally, digests double-stranded RNA. Involved in the processing of primary rRNA transcript to yield the immediate precursors to the large and small rRNAs (23S and 16S). Processes some mRNAs, and tRNAs when they are encoded in the rRNA operon. Processes pre-crRNA and tracrRNA of type II CRISPR loci if present in the organism. This Chloroflexus aggregans (strain MD-66 / DSM 9485) protein is Ribonuclease 3.